Here is a 468-residue protein sequence, read N- to C-terminus: Peroxisome proliferator-activated receptor alpha (468 aa).

A DNA-binding region (nuclear receptor) is located at residues 99–173; sequence NIECRICGDK…VGMSHNAIRF (75 aa). 2 NR C4-type zinc fingers span residues 102–122 and 139–161; these read CRICGDKASGYHYGVHACEGC and CDRSCKIQKKNRNKCQYCRFHKC. In terms of domain architecture, NR LBD spans 239-466; that stretch reads FVIHDMETLC…HPLLQEIYRD (228 aa). The interval 304 to 433 is required for heterodimerization with RXRA; the sequence is DQVTLLKYGV…PKLLQKMVDL (130 aa).

Belongs to the nuclear hormone receptor family. NR1 subfamily. As to quaternary structure, heterodimer; with RXRA. This heterodimerization is required for DNA binding and transactivation activity. Interacts with NCOA3 coactivator. Interacts with CITED2; the interaction stimulates its transcriptional activity. Also interacts with PPARBP in vitro. Interacts with AKAP13, LPIN1, PRDM16 and coactivator NCOA6. Interacts with ASXL1 and ASXL2. Interacts with PER2. Interacts with SIRT1; the interaction seems to be modulated by NAD(+) levels. Interacts with CRY1 and CRY2. In hepatocytes, interacts with PAQR3 and HUWE1; the interactions promote PPARA poylubiquitination and HUWE1-mediated degradation. Post-translationally, ubiquitinated by E3 ubiquitin-protein ligase HUWE1; leading to proteasomal degradation. In terms of processing, phosphorylated. Highly expressed in liver, kidney and heart. Very weakly expressed in brain and testis.

The protein resides in the nucleus. Its function is as follows. Ligand-activated transcription factor. Key regulator of lipid metabolism. Activated by the endogenous ligand 1-palmitoyl-2-oleoyl-sn-glycerol-3-phosphocholine (16:0/18:1-GPC). Activated by oleylethanolamide, a naturally occurring lipid that regulates satiety. Receptor for peroxisome proliferators such as hypolipidemic drugs and fatty acids. Regulates the peroxisomal beta-oxidation pathway of fatty acids. Functions as a transcription activator for the ACOX1 and P450 genes. Transactivation activity requires heterodimerization with RXRA and is antagonized by NR2C2. May be required for the propagation of clock information to metabolic pathways regulated by PER2. This Mus musculus (Mouse) protein is Peroxisome proliferator-activated receptor alpha (Ppara).